The chain runs to 526 residues: 4-alpha-glucanotransferase (526 aa).

This sequence belongs to the disproportionating enzyme family.

The protein resides in the cytoplasm. It carries out the reaction Transfers a segment of a (1-&gt;4)-alpha-D-glucan to a new position in an acceptor, which may be glucose or a (1-&gt;4)-alpha-D-glucan.. This Chlamydia pneumoniae (Chlamydophila pneumoniae) protein is 4-alpha-glucanotransferase (malQ).